Reading from the N-terminus, the 491-residue chain is MAKQDSQTEGISIDSDLINFLNASPTAFHAIDEAKKRLKHSGYVQVSERDDWKLELGKRYFFTRNHSTIVAFAIGKKYVAGNGFYVVGAHTDSPCIKLKPVSKVTKSGYLEVGVQPYGGGLWHTWFDRDLAVAGRVIVREEKHGSVSYSHRLVRIEEPIMRVPTLAIHLDRNVNTDGFKVNTQSHLLPVLATSVKAELSKVVAENGTVGNDEETDGMKSSKGTTNANSKHHSLLLQMIAGQIGCNGSDICDFELQACDTQPSVIAGAAKEFIFSGRLDNLCMSFCSLKALIDATASDSHLENESGVRMVALFDHEEVGSDSAQGAGSPVMFDALSRITSTFNSDSKLLRKAIQKSFLVSADMAHALHPNYADKHEENHQPRMHGGLVIKHNANQRYATNSVTSFLFKEIASKHNLPVQDFVVRNDMPCGSTIGPILASGVGIRTVDVGAPQLSMHSIREMCAVDDVKYSYEHFKAFFEDFSHLDSKITVDM.

Residue H90 participates in Zn(2+) binding. A substrate-binding site is contributed by H168. Zn(2+) is bound at residue D278. E315 serves as a coordination point for substrate. E316 and D361 together coordinate Zn(2+). Residues D361, H364, K389, and Y396 each contribute to the substrate site. Position 455 (H455) interacts with Zn(2+).

Belongs to the peptidase M18 family. In terms of assembly, tetrahedron-shaped homododecamer built from six homodimers. The cofactor is Zn(2+).

It localises to the cytoplasm. The enzyme catalyses Release of an N-terminal aspartate or glutamate from a peptide, with a preference for aspartate.. Its function is as follows. Likely to play an important role in intracellular protein and peptide metabolism. The sequence is that of Probable aspartyl aminopeptidase from Ricinus communis (Castor bean).